We begin with the raw amino-acid sequence, 91 residues long: Cytoplasmic envelopment protein 3 (91 aa).

Gly-2 is lipidated: N-myristoyl glycine; by host. Residues 48–81 are disordered; that stretch reads NMGTDEYDEEDEGGDGGEGREPQPEVKTTPYPKR. The span at 52-62 shows a compositional bias: acidic residues; the sequence is DEYDEEDEGGD.

Belongs to the herpesviridae cytoplasmic envelopment protein 3 family. As to quaternary structure, interacts with cytoplasmic envelopment protein 2; this interaction is essential for the proper localization of each protein to the assembly complex and thus for the production of infectious virus. Post-translationally, myristoylation and palmitoylation (probably on one or more of the nearby cysteines at the N-terminus) enable membrane-binding and Golgi apparatus-specific targeting and are essential for efficient packaging. In terms of processing, phosphorylated. Phosphorylation does not seem to be required for recycling to the host Golgi apparatus. Packaging is selective for underphosphorylated forms.

It localises to the virion tegument. The protein resides in the virion membrane. It is found in the host cell membrane. The protein localises to the host Golgi apparatus membrane. Functionally, plays an important role in the cytoplasmic envelopment of tegument proteins and capsids during the assembly and egress processes. Also participates in viral entry at the fusion step probably by regulating the core fusion machinery. The sequence is that of Cytoplasmic envelopment protein 3 (38) from Equus caballus (Horse).